Reading from the N-terminus, the 224-residue chain is Ribose-5-phosphate isomerase A (224 aa).

Residues 26–29 (TGST), 81–84 (DGAD), and 94–97 (KGGG) contribute to the substrate site. Glu103 serves as the catalytic Proton acceptor. Lys121 provides a ligand contact to substrate.

The protein belongs to the ribose 5-phosphate isomerase family. As to quaternary structure, homodimer.

The enzyme catalyses aldehydo-D-ribose 5-phosphate = D-ribulose 5-phosphate. Its pathway is carbohydrate degradation; pentose phosphate pathway; D-ribose 5-phosphate from D-ribulose 5-phosphate (non-oxidative stage): step 1/1. In terms of biological role, catalyzes the reversible conversion of ribose-5-phosphate to ribulose 5-phosphate. The protein is Ribose-5-phosphate isomerase A of Listeria monocytogenes serotype 4b (strain CLIP80459).